Reading from the N-terminus, the 153-residue chain is UPF0735 ACT domain-containing protein FN1487 (153 aa).

Residues 76–152 (SLHLSLKDRV…GIADIRITGS (77 aa)) enclose the ACT domain.

Belongs to the UPF0735 family.

The sequence is that of UPF0735 ACT domain-containing protein FN1487 from Fusobacterium nucleatum subsp. nucleatum (strain ATCC 25586 / DSM 15643 / BCRC 10681 / CIP 101130 / JCM 8532 / KCTC 2640 / LMG 13131 / VPI 4355).